Consider the following 393-residue polypeptide: Elongation factor Tu (393 aa).

Residues Lys-10 to Leu-203 form the tr-type G domain. Residues Gly-19–Thr-26 form a G1 region. Gly-19–Thr-26 is a binding site for GTP. Thr-26 contributes to the Mg(2+) binding site. Positions Gly-60–Ser-64 are G2. Residues Asp-81–Gly-84 form a G3 region. Residues Asp-81–His-85 and Asn-136–Asp-139 each bind GTP. The tract at residues Asn-136–Asp-139 is G4. The G5 stretch occupies residues Ser-173–Leu-175.

This sequence belongs to the TRAFAC class translation factor GTPase superfamily. Classic translation factor GTPase family. EF-Tu/EF-1A subfamily. Monomer.

The protein localises to the cytoplasm. The catalysed reaction is GTP + H2O = GDP + phosphate + H(+). In terms of biological role, GTP hydrolase that promotes the GTP-dependent binding of aminoacyl-tRNA to the A-site of ribosomes during protein biosynthesis. The polypeptide is Elongation factor Tu (Chlorobium phaeobacteroides (strain DSM 266 / SMG 266 / 2430)).